We begin with the raw amino-acid sequence, 297 residues long: E3 ubiquitin-protein ligase RNF212B (297 aa).

Residues 6 to 40 form an RING-type zinc finger; that stretch reads CNQCFRKDGAHFFVTSCGHIFCKKCMTLEKCAVCG. Positions 87–136 form a coiled coil; sequence LLIAFYKDRITKLEAAVKEAQEMAASQNKELSALRKENGELKKILDILKG. Disordered regions lie at residues 152–179 and 198–269; these read VGIT…RSSS and RGLH…ESLP. Residues 163-179 are compositionally biased toward low complexity; sequence PRPSSHHSSQVVSRSSS. Residues 206–234 show a composition bias toward polar residues; it reads PGDSYTETPSPASTHSLSYRPSSASSGQG.

In terms of assembly, homodimer. Autoubiquitinated.

It localises to the chromosome. It carries out the reaction S-ubiquitinyl-[E2 ubiquitin-conjugating enzyme]-L-cysteine + [acceptor protein]-L-lysine = [E2 ubiquitin-conjugating enzyme]-L-cysteine + N(6)-ubiquitinyl-[acceptor protein]-L-lysine.. Its pathway is protein modification; protein ubiquitination. Ubiquitin E3 ligase that acts as a crucial factor for crossing-over (CO) formation during meiosis. Essential for normal prophase I progression and for ensuring appropriate CO designation in meiosis. Recruits key components of the cross-over machinery either directly ou indirectly, leading to the activation of the MutL-gamma complex. The function of RNF212B in CO designation is dependent on its catalytic activity. The polypeptide is E3 ubiquitin-protein ligase RNF212B (Rnf212b) (Mus musculus (Mouse)).